Here is a 683-residue protein sequence, read N- to C-terminus: Transforming growth factor-beta-induced protein ig-h3 (683 aa).

A signal peptide spans 1–23 (MALFVRLLALALALALGPAATLA). Phosphoserine is present on Ser-37. One can recognise an EMI domain in the interval 45–99 (GPNVCAVQKVIGTNRKYFTNCKQWYQRKICGKSTVISYECCPGYEKVPGERSCPA). Intrachain disulfides connect Cys-49–Cys-85, Cys-74–Cys-339, Cys-84–Cys-97, Cys-214–Cys-317, and Cys-473–Cys-478. Residue Cys-65 is modified to S-cysteinyl cysteine. FAS1 domains are found at residues 103–236 (LANL…DKVI), 240–371 (TNNI…DELL), 375–498 (SAKT…DRML), and 502–632 (SGTV…TSVL). The short motif at 642–644 (RGD) is the Cell attachment site element.

As to quaternary structure, binds to type I, II, and IV collagens. In terms of processing, gamma-carboxylation is controversial. Gamma-carboxyglutamated; gamma-carboxyglutamate residues are formed by vitamin K dependent carboxylation; this may be required for calcium binding. According to a more recent report, does not contain vitamin K-dependent gamma-carboxyglutamate residues. The EMI domain contains 2 expected intradomain disulfide bridges (Cys-49-Cys85 and Cys-84-Cys-97) and one unusual interdomain disulfide bridge to the second FAS1 domain (Cys-74-Cys-339). This arrangement violates the predicted disulfide bridge pattern of an EMI domain. Located primarily in the epithelium of normal adult cornea, in fetal stromal cells, and both endothelium- and stroma-derived cells in healing corneal wounds. Not expressed in normal adult endothelium and stroma.

It is found in the secreted. Its subcellular location is the extracellular space. The protein localises to the extracellular matrix. In terms of biological role, plays a role in cell adhesion. May play a role in cell-collagen interactions. The protein is Transforming growth factor-beta-induced protein ig-h3 (TGFBI) of Oryctolagus cuniculus (Rabbit).